Here is a 598-residue protein sequence, read N- to C-terminus: UvrABC system protein C (598 aa).

A GIY-YIG domain is found at D14 to I91. A UVR domain is found at D196–M231.

The protein belongs to the UvrC family. As to quaternary structure, interacts with UvrB in an incision complex.

Its subcellular location is the cytoplasm. Its function is as follows. The UvrABC repair system catalyzes the recognition and processing of DNA lesions. UvrC both incises the 5' and 3' sides of the lesion. The N-terminal half is responsible for the 3' incision and the C-terminal half is responsible for the 5' incision. This Streptococcus pyogenes serotype M28 (strain MGAS6180) protein is UvrABC system protein C.